Reading from the N-terminus, the 823-residue chain is Leucine--tRNA ligase (823 aa).

The short motif at 42–52 (PYPSGTLHMGH) is the 'HIGH' region element. The 'KMSKS' region motif lies at 575-579 (KMSKS). Position 578 (lysine 578) interacts with ATP.

It belongs to the class-I aminoacyl-tRNA synthetase family.

It is found in the cytoplasm. It catalyses the reaction tRNA(Leu) + L-leucine + ATP = L-leucyl-tRNA(Leu) + AMP + diphosphate. This chain is Leucine--tRNA ligase, found in Legionella pneumophila (strain Paris).